The chain runs to 449 residues: Glucose-6-phosphate isomerase (449 aa).

Glu291 serves as the catalytic Proton donor. Residues His312 and Lys426 contribute to the active site.

Belongs to the GPI family.

The protein localises to the cytoplasm. The catalysed reaction is alpha-D-glucose 6-phosphate = beta-D-fructose 6-phosphate. It functions in the pathway carbohydrate biosynthesis; gluconeogenesis. The protein operates within carbohydrate degradation; glycolysis; D-glyceraldehyde 3-phosphate and glycerone phosphate from D-glucose: step 2/4. Its function is as follows. Catalyzes the reversible isomerization of glucose-6-phosphate to fructose-6-phosphate. This is Glucose-6-phosphate isomerase from Streptococcus pyogenes serotype M2 (strain MGAS10270).